The sequence spans 556 residues: WD repeat-containing protein srw1 (556 aa).

Residues 1–80 (MDEFDGFTRP…NEGDRFIPSR (80 aa)) form a disordered region. Residues 12–37 (SSNSSANRNSNNSMNRVENNNSNSDS) are compositionally biased toward low complexity. Basic and acidic residues predominate over residues 43–55 (SRGDAHTRMRQGF). Phosphoserine is present on serine 62. A compositionally biased stretch (basic and acidic residues) spans 69–78 (RTNEGDRFIP). Threonine 98 is subject to Phosphothreonine. The span at 126–146 (TFNNSPIATPNTTIGVSTPRT) shows a compositional bias: polar residues. Residues 126–173 (TFNNSPIATPNTTIGVSTPRTDSGIDDIELTQRTPPSSSHTSSSILQN) are disordered. The segment covering 159 to 169 (TPPSSSHTSSS) has biased composition (low complexity). The residue at position 177 (threonine 177) is a Phosphothreonine. Serine 187 and serine 214 each carry phosphoserine. 7 WD repeats span residues 246–285 (GLAGDFYLNLLDWGQCNMLAVALASRVYLWSGISSEVTVM), 289–328 (YPTDTVTSLRWVQRGTHLAVGTHNGSVEIWDAATCKKTRT), 331–368 (GHTERVGALSWNDHVLSSGGRDNHILHRDVRAPEHYFR), 372–411 (AHRQEVCGLEWNSNENLLASGGNDNALMVWDKFEEKPLYS), 414–456 (NHIA…MLHN), 458–499 (DTGS…RVGT), and 502–541 (GHTDRVLYLAMSPNGENIVTGAADETLRFWKLFDSKSKHS).

The protein belongs to the WD repeat CDC20/Fizzy family. Post-translationally, phosphorylated by cdc2-cdc13-CDK complex. This targets srw1 for proteolysis which in turn promotes cdc13 turnover. Dephosphorylated during G1 arrest.

Its subcellular location is the nucleus. In terms of biological role, has a role in cell differentiation and cell cycling by negatively regulating cig2 and cdc12-associated cdc2. Down-regulates the level of cdc13, particularly in a nitrogen deprived environment. Regulator of cell cycle G1 phase progression. Prevents onset of mitosis during the pre-Start G1 period. Required for degradation of cdc13 mitotic cyclin B during G1 arrest but not during mitotic exit. This chain is WD repeat-containing protein srw1 (srw1), found in Schizosaccharomyces pombe (strain 972 / ATCC 24843) (Fission yeast).